Reading from the N-terminus, the 141-residue chain is MRQRTIVCPLIQNDGYYLLCKMADNRGVFPGQWALSGGGVEPGERIEEALRREVREELGEQLILSDITPWTFRDDIRVKTYADGRQEEIYMIYLIFDCVSANRDICINDEFQDYAWVKPEELALYDLNVATRHTLALKGLL.

The 141-residue stretch at 1–141 folds into the Nudix hydrolase domain; the sequence is MRQRTIVCPL…RHTLALKGLL (141 aa). The Nudix box motif lies at 38–59; sequence GGVEPGERIEEALRREVREELG.

Belongs to the Nudix hydrolase family. NudI subfamily. As to quaternary structure, monomer. Mg(2+) serves as cofactor.

It catalyses the reaction a ribonucleoside 5'-triphosphate + H2O = a ribonucleoside 5'-phosphate + diphosphate + H(+). The enzyme catalyses a 2'-deoxyribonucleoside 5'-triphosphate + H2O = a 2'-deoxyribonucleoside 5'-phosphate + diphosphate + H(+). The catalysed reaction is dUTP + H2O = dUMP + diphosphate + H(+). It carries out the reaction dTTP + H2O = dTMP + diphosphate + H(+). It catalyses the reaction dCTP + H2O = dCMP + diphosphate + H(+). Catalyzes the hydrolysis of nucleoside triphosphates, with a preference for pyrimidine deoxynucleoside triphosphates (dUTP, dTTP and dCTP). The protein is Nucleoside triphosphatase NudI of Salmonella agona (strain SL483).